The chain runs to 414 residues: Glucose-1-phosphate adenylyltransferase (414 aa).

Alpha-D-glucose 1-phosphate contacts are provided by residues Gly-164, 181 to 182, and Ser-199; that span reads EK.

The protein belongs to the bacterial/plant glucose-1-phosphate adenylyltransferase family. As to quaternary structure, homotetramer.

The catalysed reaction is alpha-D-glucose 1-phosphate + ATP + H(+) = ADP-alpha-D-glucose + diphosphate. Its pathway is glycan biosynthesis; glycogen biosynthesis. In terms of biological role, involved in the biosynthesis of ADP-glucose, a building block required for the elongation reactions to produce glycogen. Catalyzes the reaction between ATP and alpha-D-glucose 1-phosphate (G1P) to produce pyrophosphate and ADP-Glc. In Leifsonia xyli subsp. xyli (strain CTCB07), this protein is Glucose-1-phosphate adenylyltransferase.